Here is a 520-residue protein sequence, read N- to C-terminus: Cytochrome P450 monooxygenase oblB (520 aa).

3 consecutive transmembrane segments (helical) span residues 17-37 (VAVI…RLFL), 229-249 (LFMG…SILA), and 320-340 (IGTG…HIVV). Residue C462 coordinates heme.

Belongs to the cytochrome P450 family. Heme is required as a cofactor.

The protein localises to the membrane. It functions in the pathway secondary metabolite biosynthesis; terpenoid biosynthesis. Functionally, cytochrome P450 monooxygenase; part of the gene cluster that mediates the biosynthesis of the sesterterpenes ophiobolins, fungal phytotoxins with potential anti-cancer activities. The first step of the pathway is performed by the sesterterpene synthase oblA that possesses both prenyl transferase and terpene cyclase activity, converting isopentenyl diphosphate and dimethylallyl diphosphate into geranylfarnesyl diphosphate (GFPP) and further converting GFPP into ophiobolin F, respectively. Other sesterterpenoids (C(25) terpenoids) are found as minor products of oblA. It is expected that ophiobolin F is then oxidized to ophiobolin A via ophiobolin C and ophiobolin B intermediates by the combined action of the cytochrome P450 monooxygenase oblB and the FAD-dependent oxidoreductase oblC. Although oblB catalyzes multistep oxygenations at C5 and C21/C7 in a relatively efficient manner, it is unable to convert ophiobolin F to ophiobolin C and produces instead several unexpected derivatives. This Aspergillus clavatus (strain ATCC 1007 / CBS 513.65 / DSM 816 / NCTC 3887 / NRRL 1 / QM 1276 / 107) protein is Cytochrome P450 monooxygenase oblB.